Reading from the N-terminus, the 184-residue chain is Probable RNA 2'-phosphotransferase (184 aa).

It belongs to the KptA/TPT1 family.

In terms of biological role, removes the 2'-phosphate from RNA via an intermediate in which the phosphate is ADP-ribosylated by NAD followed by a presumed transesterification to release the RNA and generate ADP-ribose 1''-2''-cyclic phosphate (APPR&gt;P). May function as an ADP-ribosylase. In Rhizobium leguminosarum bv. trifolii (strain WSM2304), this protein is Probable RNA 2'-phosphotransferase.